Reading from the N-terminus, the 1391-residue chain is MNLLNLFNPLQTAGMEEEFDAIKIGIASPETIRSWSYGEVKKPETINYRTFKPERDGLFCAKIFGPVKDYECLCGKYKRLKFKGVTCEKCGVEVTLSKVRRERMGHIELAAPVAHIWFLKSLPSRLGMVLDMTLRDIERVLYFEAFVVTDPGMTPLQRRQLLTEDDYYNKLDEYGDDFDAKMGAEGIRELLRTLNVAGEIEILRQELESTGSDTKIKKIAKRLKVLEAFHRSGMKLEWMIMDVLPVLPPDLRPLVPLDGGRFATSDLNDLYRRVINRNNRLKRLLELHAPDIIVRNEKRMLQEAVDSLLDNGRRGKAMTGANKRPLKSLADMIKGKGGRFRQNLLGKRVDYSGRSVITVGPYLRLHQCGLPKKMALELFKPFIFHKLEKQGLASTVKAAKKLVEQEVPEVWDILEEVIREHPIMLNRAPTLHRLGIQAFEPILIEGKAIQLHPLVCAAFNADFDGDQMAVHVPLSLEAQMEARTLMLASNNVLSPANGEPIIVPSQDIVLGLYYMTRDRINAKGEGSLFADVKEVHRAYHTKQVELGTKITVRLREWVKNEAGEFEPVVNRYETTVGRALLSEILPKGLPFEYVNKALKKKEISKLINASFRLCGLRDTVIFADHLMYTGFGFAAKGGISIAVDDMEIPKEKAALLAEANAEVKEIEDQYRQGLVTNGERYNKVVDIWGRAGDKIAKAMMDNLSKQKVIDRAGNEVDQESFNSIYMMADSGARGSAAQIKQLSGMRGLMAKPDGSIIETPITSNFREGLTVLQYFIATHGARKGLADTALKTANSGYLTRRLVDVTQDLVVVEDDCGTSDGFVMKAVVQGGDVIEALRDRILGRVTASDVVDPSSGETLVEAGTLLTEKLVDMIDQSGVDEVKVRTPITCKTRHGLCAHCYGRDLARGKLVNAGEAVGVIAAQSIGEPGTQLTMRTFHIGGAASRAAAASQVEAKSNGTARFSSQMRYVANNKGELVVIGRSCEVVIHDDIGRERERHKVPYGAILLVQDGMAIKAGQTLATWDPHTRPMITEHAGMVKFENVEEGVTVAKQTDDVTGLSTLVVIDGKRRSSSASKLLRPTVKLLDENGVEICIPGTSTPVSMAFPVGAVITVREGQEIGKGDVLARIPQASSKTRDITGGLPRVAELFEARVPKDAGMLAEITGTVSFGKETKGKQRLIVTDVDGVAYETLISKEKQILVHDGQVVNRGETIVDGAVDPHDILRLQGIEALARYIVQEVQEVYRLQGVKISDKHIEVIIRQMLRRVNIADAGETGFITGEQVERGDVMLANEKALEEGKEPARYENVLLGITKASLSTDSFISAASFQETTRVLTEAAIMGKQDELRGLKENVIVGRLIPAGTGLTYHRSRHQQWQEVEQETAETQVTDE.

Positions 72, 74, 87, and 90 each coordinate Zn(2+). Mg(2+) is bound by residues Asp-462, Asp-464, and Asp-466. Residues Cys-816, Cys-890, Cys-897, and Cys-900 each contribute to the Zn(2+) site.

The protein belongs to the RNA polymerase beta' chain family. In terms of assembly, the RNAP catalytic core consists of 2 alpha, 1 beta, 1 beta' and 1 omega subunit. When a sigma factor is associated with the core the holoenzyme is formed, which can initiate transcription. It depends on Mg(2+) as a cofactor. The cofactor is Zn(2+).

The catalysed reaction is RNA(n) + a ribonucleoside 5'-triphosphate = RNA(n+1) + diphosphate. DNA-dependent RNA polymerase catalyzes the transcription of DNA into RNA using the four ribonucleoside triphosphates as substrates. This Neisseria meningitidis serogroup C (strain 053442) protein is DNA-directed RNA polymerase subunit beta'.